Reading from the N-terminus, the 285-residue chain is Type II restriction enzyme Cfr10I (285 aa).

2 residues coordinate Mg(2+): Asp-134 and Glu-204.

Homodimer. The cofactor is Mg(2+).

The catalysed reaction is Endonucleolytic cleavage of DNA to give specific double-stranded fragments with terminal 5'-phosphates.. An F and P subtype restriction enzyme that recognizes the double-stranded sequence 5'-RCCGGY-3' and cleaves after R-1. The protein is Type II restriction enzyme Cfr10I (cfr10IR) of Citrobacter freundii.